Here is a 95-residue protein sequence, read N- to C-terminus: Co-chaperonin GroES (95 aa).

It belongs to the GroES chaperonin family. In terms of assembly, heptamer of 7 subunits arranged in a ring. Interacts with the chaperonin GroEL.

The protein localises to the cytoplasm. Functionally, together with the chaperonin GroEL, plays an essential role in assisting protein folding. The GroEL-GroES system forms a nano-cage that allows encapsulation of the non-native substrate proteins and provides a physical environment optimized to promote and accelerate protein folding. GroES binds to the apical surface of the GroEL ring, thereby capping the opening of the GroEL channel. The polypeptide is Co-chaperonin GroES (Glaesserella parasuis serovar 5 (strain SH0165) (Haemophilus parasuis)).